The primary structure comprises 318 residues: Pantothenate kinase (318 aa).

96 to 103 (GSVAVGKS) is an ATP binding site.

The protein belongs to the prokaryotic pantothenate kinase family.

The protein localises to the cytoplasm. The catalysed reaction is (R)-pantothenate + ATP = (R)-4'-phosphopantothenate + ADP + H(+). It participates in cofactor biosynthesis; coenzyme A biosynthesis; CoA from (R)-pantothenate: step 1/5. The sequence is that of Pantothenate kinase from Rhodopseudomonas palustris (strain HaA2).